Here is a 1130-residue protein sequence, read N- to C-terminus: Alpha-mannosidase 2 (1130 aa).

At 1 to 14 (MRTRVLRCRPFSTR) the chain is on the cytoplasmic side. The chain crosses the membrane as a helical; Signal-anchor for type II membrane protein span at residues 15-35 (ILLLLLFVLAFGVYCYFYNAS). The Lumenal portion of the chain corresponds to 36–1130 (PQNYNKPRIS…MEVKTYKIRF (1095 aa)). N-linked (GlcNAc...) asparagine glycosylation is present at N117. Zn(2+) is bound by residues H133 and D135. The N-linked (GlcNAc...) asparagine glycan is linked to N166. Residues D247 and H527 each coordinate Zn(2+). Residue D247 is the Nucleophile of the active site. N-linked (GlcNAc...) asparagine glycans are attached at residues N622, N683, N1056, and N1095.

Belongs to the glycosyl hydrolase 38 family. As to quaternary structure, homodimer; disulfide-linked. Zn(2+) is required as a cofactor. In terms of processing, N-glycosylated.

It localises to the microsome membrane. Its subcellular location is the golgi apparatus membrane. It catalyses the reaction N(4)-{beta-D-GlcNAc-(1-&gt;2)-alpha-D-Man-(1-&gt;3)-[alpha-D-Man-(1-&gt;3)-[alpha-D-Man-(1-&gt;6)]-alpha-D-Man-(1-&gt;6)]-beta-D-Man-(1-&gt;4)-beta-D-GlcNAc-(1-&gt;4)-beta-D-GlcNAc}-L-asparaginyl-[protein] + 2 H2O = 2 alpha-D-mannopyranose + an N(4)-{beta-D-GlcNAc-(1-&gt;2)-alpha-D-Man-(1-&gt;3)-[alpha-D-Man-(1-&gt;6)]-beta-D-Man-(1-&gt;4)-beta-D-GlcNAc-(1-&gt;4)-beta-D-GlcNAc}-L-asparaginyl-[protein]. It participates in protein modification; protein glycosylation. With respect to regulation, inhibited by swainsonine. In terms of biological role, catalyzes the first committed step in the biosynthesis of complex N-glycans. It controls conversion of high mannose to complex N-glycans; the final hydrolytic step in the N-glycan maturation pathway. The protein is Alpha-mannosidase 2 of Spodoptera frugiperda (Fall armyworm).